Here is a 401-residue protein sequence, read N- to C-terminus: 1-deoxy-D-xylulose 5-phosphate reductoisomerase (401 aa).

NADPH is bound by residues Thr10, Gly11, Ser12, Ile13, Gly36, Arg37, Asn38, and Asn124. Lys125 contributes to the 1-deoxy-D-xylulose 5-phosphate binding site. Glu126 is an NADPH binding site. Residue Asp150 coordinates Mn(2+). The 1-deoxy-D-xylulose 5-phosphate site is built by Ser151, Glu152, Ser176, and His199. Glu152 contributes to the Mn(2+) binding site. Gly205 serves as a coordination point for NADPH. Residues Ser212, Asn217, Lys218, and Glu221 each coordinate 1-deoxy-D-xylulose 5-phosphate. Glu221 contributes to the Mn(2+) binding site.

The protein belongs to the DXR family. Requires Mg(2+) as cofactor. It depends on Mn(2+) as a cofactor.

The catalysed reaction is 2-C-methyl-D-erythritol 4-phosphate + NADP(+) = 1-deoxy-D-xylulose 5-phosphate + NADPH + H(+). It participates in isoprenoid biosynthesis; isopentenyl diphosphate biosynthesis via DXP pathway; isopentenyl diphosphate from 1-deoxy-D-xylulose 5-phosphate: step 1/6. Catalyzes the NADPH-dependent rearrangement and reduction of 1-deoxy-D-xylulose-5-phosphate (DXP) to 2-C-methyl-D-erythritol 4-phosphate (MEP). In Acaryochloris marina (strain MBIC 11017), this protein is 1-deoxy-D-xylulose 5-phosphate reductoisomerase.